The sequence spans 1143 residues: MHNTNLKYFTSPLNSTTLASSAMLYHSTLRSSSPKSAICGRFSGKSQQVITLSSTGNALYLYSHDGDTGTVTLIHTHLTHCQVREIRAFRLPGLKKDYVIASSDSGVISVLEFRHNRFVSLHKEAYGRSGIRRVVPGEFLAVDPKGRACMLASVEKSKLVYVLNRQGADIVISSPLEAHTSCVTYFVVACDVAYENPVFAAIETPVGETSPGKQLVFYELDLGLNHVIRKAPVDIPNSTSHVTAVPGGTDGPGGVLVFSTNAIVHHVAGAAGGASTGAAGSTKIALPKPAAGYDNVIVASALHQSRDLFFYIAQNTRGDLFKISRDSETQHWSVLYFGTMSCVCTSLTILKSAHMVCLSEQGDSHMMFFESLGDDDAPENVYDVISPSPYLTVTQTLFELKPVFDSVVGVNTTSSDHVGPVPNVLSLISATRGGLKLISHALKPSIIVASPLPEPPSKLWTMRDGAGSDKYIVLSYANATLVLEIGDSVVETTSSGLTLDKPTLHCGSVGSSYVQVMTDGMNVIPMSREGSSESLPATKWTAPSGQVICASSSSHQVVLGLTSSLFYFEDTPGSELSAYDGAYELSSPPTAVAVAPVPAGRVRSPFVAVATDDETVRIVSVDPESMFETVAVQGLMATASSLALLSVGQVLYLHMGLANGVYVRVELDPLTGEIVGSWSKFVGLGRLSVVPVTCGGEESILVSSRGVKTCLGHVNATSDTWVPTGGNSAPFFALDAISGEPLDLAHSFHTQDCPHGVIGVAGSTLKIFTVNTAQKWTENEVKLEGTAKRLIQHDATTLTITQNPDRLVSVDNGAVGITKDLGGPPTSICEVMFGDGKRYFAVGGSRDGSPGTSGTSGYISIFSSSSLGHVHTTEVEAPPLALCAYNGLLVAGIGSQVRLYALGLKQVLRKAQIELSKRVTCLAHFAGSNRVAVGDIRQSVTVCVVLEEDSGHVIYPLVCDKISRQVTCLFFVDYETVALGDRFGGFTMLRIPSEASKLADEDHNAVHLRQLEPTLNGPAHFRFDHVASFHIEDVPVAIHMYNDYLVVCGLLGTVSAFVPVVSPKQSRDLKTIEKFVCASDPGLMGRDHGRFRGYYVPVKEVVDGDMLREVLVMDEKRREEVGEKTGLGVEGAVGRVVNVMKCV.

It belongs to the RSE1 family. As to quaternary structure, associated with the spliceosome.

It localises to the nucleus. Its function is as follows. Involved in pre-mRNA splicing. The polypeptide is Pre-mRNA-splicing factor RSE1 (RSE1) (Yarrowia lipolytica (strain CLIB 122 / E 150) (Yeast)).